The chain runs to 500 residues: NAD(P)H-quinone oxidoreductase chain 4, chloroplastic (500 aa).

A run of 14 helical transmembrane segments spans residues 4–24 (FPWL…IFFL), 37–57 (ISIC…HFQL), 87–107 (LGSI…AWPI), 113–130 (LFYF…GLFS), 134–154 (LLLF…LLSM), 167–187 (FILY…GMGL), 211–231 (ILLY…IPLH), 242–262 (HYST…YGLI), 272–292 (AHYL…IYAA), 313–333 (MGFI…GAIL), 334–354 (QILS…TASD), 386–406 (LALP…GLIT), 417–437 (LITF…LSML), and 462–482 (LFIL…PDFV).

It belongs to the complex I subunit 4 family.

It localises to the plastid. It is found in the chloroplast thylakoid membrane. The enzyme catalyses a plastoquinone + NADH + (n+1) H(+)(in) = a plastoquinol + NAD(+) + n H(+)(out). It carries out the reaction a plastoquinone + NADPH + (n+1) H(+)(in) = a plastoquinol + NADP(+) + n H(+)(out). In Triticum aestivum (Wheat), this protein is NAD(P)H-quinone oxidoreductase chain 4, chloroplastic (ndhD).